A 71-amino-acid polypeptide reads, in one-letter code: MSYYRKRLSPISPSQPIDYKDTELLRKFITERGKILPRRITGLTSKQQRDLTEAVKRARLMALLPFVNQEA.

Belongs to the bacterial ribosomal protein bS18 family. Part of the 30S ribosomal subunit. Forms a tight heterodimer with protein bS6.

Its function is as follows. Binds as a heterodimer with protein bS6 to the central domain of the 16S rRNA, where it helps stabilize the platform of the 30S subunit. The protein is Small ribosomal subunit protein bS18 of Microcystis aeruginosa (strain NIES-843 / IAM M-2473).